A 405-amino-acid polypeptide reads, in one-letter code: Probable succinyl-diaminopimelate desuccinylase (405 aa).

Zn(2+) is bound at residue H72. D74 is an active-site residue. Residue D105 participates in Zn(2+) binding. The Proton acceptor role is filled by E139. Zn(2+) is bound by residues E140, E165, and H377.

Belongs to the peptidase M20A family. Requires Zn(2+) as cofactor. Co(2+) serves as cofactor.

It catalyses the reaction N-succinyl-(2S,6S)-2,6-diaminopimelate + H2O = (2S,6S)-2,6-diaminopimelate + succinate. It participates in amino-acid biosynthesis; L-lysine biosynthesis via DAP pathway; LL-2,6-diaminopimelate from (S)-tetrahydrodipicolinate (succinylase route): step 3/3. The chain is Probable succinyl-diaminopimelate desuccinylase (dapE) from Staphylococcus epidermidis (strain ATCC 35984 / DSM 28319 / BCRC 17069 / CCUG 31568 / BM 3577 / RP62A).